Consider the following 278-residue polypeptide: Pre-hexon-linking protein VIII (278 aa).

Residues 114-199 (SPSLLSGGAS…ILRYRRLGQQ (86 aa)) constitute a propeptide that is removed on maturation.

It belongs to the adenoviridae hexon-linking protein family. As to quaternary structure, interacts with the peripentonal hexons as well as the hexons in the facets. Part of a complex composed of the core-capsid bridging protein, the endosome lysis protein VI and the hexon-linking protein VIII; these interactions bridge the virus core to the capsid. Cleaved by the viral protease during virion maturation. May cause the middle segment to be shed from the capsid.

It localises to the virion. The protein localises to the host nucleus. Functionally, structural component of the virion that acts as a cement protein on the capsid interior and which glue the peripentonal hexons and group-of-nine hexons together. The polypeptide is Pre-hexon-linking protein VIII (Pantherophis guttatus (Corn snake)).